Consider the following 276-residue polypeptide: uncharacterized protein (276 aa).

The AB hydrolase-1 domain maps to 20-137 (PVLIFIPGAN…PPINTFLPDS (118 aa)). Residues 57–76 (GESELTEPLPDSASNPDSDY) form a disordered region.

This sequence belongs to the AB hydrolase superfamily.

This is an uncharacterized protein from Staphylococcus aureus (strain MW2).